Consider the following 309-residue polypeptide: Epidermal retinol dehydrogenase 2 (309 aa).

Residues 11–31 (LLVFLGKSLLSVLEALLFHVI) form a helical membrane-spanning segment. Position 44–68 (44–68 (LITGAGSGLGRLLALQFARLGAVLV)) interacts with NADP(+). Ser177 contributes to the substrate binding site. Tyr190 functions as the Proton acceptor in the catalytic mechanism. Residues 270–290 (FLYFIVFLKSILPIKTGILIA) traverse the membrane as a helical segment.

This sequence belongs to the short-chain dehydrogenases/reductases (SDR) family.

It localises to the endoplasmic reticulum membrane. The enzyme catalyses all-trans-retinol--[retinol-binding protein] + NAD(+) = all-trans-retinal--[retinol-binding protein] + NADH + H(+). Its pathway is cofactor metabolism; retinol metabolism. Its function is as follows. Oxidoreductase with strong preference for NAD. Active in both the oxidative and reductive directions. Oxidizes all-trans-retinol in all-trans-retinaldehyde. No activity was detected with 11-cis-retinol or 11-cis-retinaldehyde as substrates with either NAD(+)/NADH or NADP(+)/NADPH. The polypeptide is Epidermal retinol dehydrogenase 2 (Mus musculus (Mouse)).